We begin with the raw amino-acid sequence, 323 residues long: Olfactory receptor 51S1 (323 aa).

Residues 1 to 33 lie on the Extracellular side of the membrane; sequence MSTLPTQIAPNSSTSMAPTFLLVGMPGLSGAPS. Asparagine 11 is a glycosylation site (N-linked (GlcNAc...) asparagine). Residues 34–54 traverse the membrane as a helical segment; that stretch reads WWTLPLIAVYLLSALGNGTIL. Residues 55–62 are Cytoplasmic-facing; it reads WIIALQPA. Residues 63-83 form a helical membrane-spanning segment; sequence LHRPMHFFLFLLSVSDIGLVT. The Extracellular portion of the chain corresponds to 84-107; sequence ALMPTLLGIALAGAHTVPASACLL. The cysteines at positions 105 and 197 are disulfide-linked. Residues 108–128 traverse the membrane as a helical segment; the sequence is QMVFIHVFSVMESSVLLAMSI. At 129–147 the chain is on the cytoplasmic side; that stretch reads DRALAICRPLHYPALLTNG. The chain crosses the membrane as a helical span at residues 148-168; sequence VISKISLAISFRCLGLHLPLP. The Extracellular segment spans residues 169–203; that stretch reads FLLAYMPYCLPQVLTHSYCLHPDVARLACPEAWGA. The chain crosses the membrane as a helical span at residues 204 to 224; sequence AYSLFVVLSAMGLDPLLIFFS. Over 225–244 the chain is Cytoplasmic; it reads YGLIGKVLQGVESREDRWKA. Residues 245-265 traverse the membrane as a helical segment; sequence GQTCAAHLSAVLLFYIPMILL. Residues 266-280 are Extracellular-facing; the sequence is ALINHPELPITQHTH. A helical membrane pass occupies residues 281–301; that stretch reads TLLSYVHFLLPPLINPILYSV. The Cytoplasmic portion of the chain corresponds to 302–323; the sequence is KMKEIRKRILNRLQPRKVGGAQ.

Belongs to the G-protein coupled receptor 1 family.

The protein resides in the cell membrane. Odorant receptor. In Homo sapiens (Human), this protein is Olfactory receptor 51S1 (OR51S1).